Here is a 282-residue protein sequence, read N- to C-terminus: MENGFLLINKEQGKTSFETLFPIKKYFNTNHVGHAGILDKFASGILIALVGKYTKLANYFMSLDKEYVAEFRFGLETDTLDPNGRIVNKTDYIPNLEDIDLKLKDFVGEIYQSPPRFSSVHINGSRAYKLALNGKFFEIKKRRVNVYDIQRLSYDFSSSLLSLKISCSKGTYIRSIARDLAYSLNSCAYVSSLKRTKVGIFRLEDSTLCKNLSKASLISLESLKSFEKVCIDSSKINLVKNGAYVEIQININEFKILKSREGEILAVIKGIDLNKYKYVIIF.

D39 serves as the catalytic Nucleophile.

Belongs to the pseudouridine synthase TruB family. Type 1 subfamily.

It carries out the reaction uridine(55) in tRNA = pseudouridine(55) in tRNA. Responsible for synthesis of pseudouridine from uracil-55 in the psi GC loop of transfer RNAs. This Borreliella afzelii (strain PKo) (Borrelia afzelii) protein is tRNA pseudouridine synthase B.